Consider the following 233-residue polypeptide: 5'-methylthioadenosine/S-adenosylhomocysteine nucleosidase (233 aa).

The Proton acceptor role is filled by glutamate 12. Substrate-binding positions include glycine 78, isoleucine 152, and 173 to 174 (ME). Residue aspartate 197 is the Proton donor of the active site.

It belongs to the PNP/UDP phosphorylase family. MtnN subfamily. As to quaternary structure, homodimer.

The catalysed reaction is S-adenosyl-L-homocysteine + H2O = S-(5-deoxy-D-ribos-5-yl)-L-homocysteine + adenine. It catalyses the reaction S-methyl-5'-thioadenosine + H2O = 5-(methylsulfanyl)-D-ribose + adenine. It carries out the reaction 5'-deoxyadenosine + H2O = 5-deoxy-D-ribose + adenine. The protein operates within amino-acid biosynthesis; L-methionine biosynthesis via salvage pathway; S-methyl-5-thio-alpha-D-ribose 1-phosphate from S-methyl-5'-thioadenosine (hydrolase route): step 1/2. Catalyzes the irreversible cleavage of the glycosidic bond in both 5'-methylthioadenosine (MTA) and S-adenosylhomocysteine (SAH/AdoHcy) to adenine and the corresponding thioribose, 5'-methylthioribose and S-ribosylhomocysteine, respectively. Also cleaves 5'-deoxyadenosine, a toxic by-product of radical S-adenosylmethionine (SAM) enzymes, into 5-deoxyribose and adenine. Thus, is required for in vivo function of the radical SAM enzymes biotin synthase and lipoic acid synthase, that are inhibited by 5'-deoxyadenosine accumulation. The polypeptide is 5'-methylthioadenosine/S-adenosylhomocysteine nucleosidase (Yersinia pseudotuberculosis serotype O:1b (strain IP 31758)).